The following is a 99-amino-acid chain: NADH-quinone oxidoreductase subunit K (99 aa).

Transmembrane regions (helical) follow at residues 3 to 23 (PDNY…GVLL), 28 to 48 (IVMF…FVTF), and 59 to 79 (VVAF…LAII).

Belongs to the complex I subunit 4L family. In terms of assembly, NDH-1 is composed of 14 different subunits. Subunits NuoA, H, J, K, L, M, N constitute the membrane sector of the complex.

The protein resides in the cell membrane. It carries out the reaction a quinone + NADH + 5 H(+)(in) = a quinol + NAD(+) + 4 H(+)(out). In terms of biological role, NDH-1 shuttles electrons from NADH, via FMN and iron-sulfur (Fe-S) centers, to quinones in the respiratory chain. The immediate electron acceptor for the enzyme in this species is believed to be a menaquinone. Couples the redox reaction to proton translocation (for every two electrons transferred, four hydrogen ions are translocated across the cytoplasmic membrane), and thus conserves the redox energy in a proton gradient. The polypeptide is NADH-quinone oxidoreductase subunit K (Mycolicibacterium gilvum (strain PYR-GCK) (Mycobacterium gilvum (strain PYR-GCK))).